A 166-amino-acid chain; its full sequence is Small heat shock protein OV25-2 (166 aa).

One can recognise a sHSP domain in the interval 38–149; that stretch reads LNECNIGNSL…ASRNIPIRAS (112 aa). Residues 140 to 166 are disordered; it reads ASRNIPIRASPKEPEANQKSAINDAKQ.

The protein belongs to the small heat shock protein (HSP20) family.

In Onchocerca volvulus, this protein is Small heat shock protein OV25-2 (OV25-2).